A 133-amino-acid chain; its full sequence is Ribulose bisphosphate carboxylase small subunit (133 aa).

It belongs to the RuBisCO small chain family. As to quaternary structure, heterohexadecamer of 8 large and 8 small subunits.

RuBisCO catalyzes two reactions: the carboxylation of D-ribulose 1,5-bisphosphate, the primary event in carbon dioxide fixation, as well as the oxidative fragmentation of the pentose substrate. Both reactions occur simultaneously and in competition at the same active site. Although the small subunit is not catalytic it is essential for maximal activity. In Xanthobacter flavus, this protein is Ribulose bisphosphate carboxylase small subunit.